Reading from the N-terminus, the 284-residue chain is Flavin-dependent thymidylate synthase (284 aa).

The ThyX domain occupies 27–237 (GFIRVVDYMG…PLAYNAFVEY (211 aa)). FAD-binding positions include threonine 73, 96–98 (RHR), and glutamate 104. DUMP-binding positions include 93–96 (QWIR) and 104–108 (EYSAR). The ThyX motif motif lies at 96–106 (RHRTANVNEYS). Residues 122-142 (EQVAKQSDNNKQGSGEAFDPD) form a disordered region. Over residues 125–134 (AKQSDNNKQG) the composition is skewed to polar residues. DUMP is bound at residue arginine 176. Residues 192–194 (DLH) and histidine 198 each bind FAD. Arginine 203 contacts dUMP. Catalysis depends on arginine 203, which acts as the Involved in ionization of N3 of dUMP, leading to its activation.

This sequence belongs to the thymidylate synthase ThyX family. In terms of assembly, homotetramer. FAD serves as cofactor.

The catalysed reaction is dUMP + (6R)-5,10-methylene-5,6,7,8-tetrahydrofolate + NADPH + H(+) = dTMP + (6S)-5,6,7,8-tetrahydrofolate + NADP(+). It participates in pyrimidine metabolism; dTTP biosynthesis. In terms of biological role, catalyzes the reductive methylation of 2'-deoxyuridine-5'-monophosphate (dUMP) to 2'-deoxythymidine-5'-monophosphate (dTMP) while utilizing 5,10-methylenetetrahydrofolate (mTHF) as the methyl donor, and NADPH and FADH(2) as the reductant. The protein is Flavin-dependent thymidylate synthase of Wolbachia pipientis wMel.